A 282-amino-acid polypeptide reads, in one-letter code: Formamidopyrimidine-DNA glycosylase (282 aa).

Residue P2 is the Schiff-base intermediate with DNA of the active site. E3 acts as the Proton donor in catalysis. K61 serves as the catalytic Proton donor; for beta-elimination activity. Positions 93, 112, and 158 each coordinate DNA. The segment at 244–278 adopts an FPG-type zinc-finger fold; sequence DAYGREGEGCRRCGAVMHREKFMNRSSFYCPRCQP. Catalysis depends on R268, which acts as the Proton donor; for delta-elimination activity.

Belongs to the FPG family. As to quaternary structure, monomer. Zn(2+) serves as cofactor.

The enzyme catalyses Hydrolysis of DNA containing ring-opened 7-methylguanine residues, releasing 2,6-diamino-4-hydroxy-5-(N-methyl)formamidopyrimidine.. It catalyses the reaction 2'-deoxyribonucleotide-(2'-deoxyribose 5'-phosphate)-2'-deoxyribonucleotide-DNA = a 3'-end 2'-deoxyribonucleotide-(2,3-dehydro-2,3-deoxyribose 5'-phosphate)-DNA + a 5'-end 5'-phospho-2'-deoxyribonucleoside-DNA + H(+). Involved in base excision repair of DNA damaged by oxidation or by mutagenic agents. Acts as a DNA glycosylase that recognizes and removes damaged bases. Has a preference for oxidized purines, such as 7,8-dihydro-8-oxoguanine (8-oxoG). Has AP (apurinic/apyrimidinic) lyase activity and introduces nicks in the DNA strand. Cleaves the DNA backbone by beta-delta elimination to generate a single-strand break at the site of the removed base with both 3'- and 5'-phosphates. The sequence is that of Formamidopyrimidine-DNA glycosylase from Mycobacterium leprae (strain Br4923).